A 126-amino-acid polypeptide reads, in one-letter code: Histone H2B type 1-H (126 aa).

Residues 1–12 (MPEPAKSAPAPK) show a composition bias toward low complexity. The segment at 1 to 36 (MPEPAKSAPAPKKGSKKALTKAQKKDGKKRKRSRKE) is disordered. Residue P2 is modified to N-acetylproline. The residue at position 3 (E3) is an ADP-ribosyl glutamic acid. At K6 the chain carries N6-(2-hydroxyisobutyryl)lysine; alternate. K6 carries the N6-(beta-hydroxybutyryl)lysine; alternate modification. K6 bears the N6-acetyllysine; alternate mark. Residue K6 is modified to N6-butyryllysine; alternate. K6 bears the N6-crotonyllysine; alternate mark. Position 6 is an N6-lactoyllysine; alternate (K6). K6 is covalently cross-linked (Glycyl lysine isopeptide (Lys-Gly) (interchain with G-Cter in SUMO2); alternate). At S7 the chain carries ADP-ribosylserine. K12 is modified (N6-(beta-hydroxybutyryl)lysine; alternate). An N6-acetyllysine; alternate mark is found at K12 and K13. K12 and K13 each carry N6-crotonyllysine; alternate. Residue K12 is modified to N6-lactoyllysine; alternate. K13 bears the N6-(2-hydroxyisobutyryl)lysine; alternate mark. S15 carries the post-translational modification Phosphoserine; by STK4/MST1. K16, K17, K21, and K24 each carry N6-acetyllysine; alternate. K16, K17, K21, and K24 each carry N6-crotonyllysine; alternate. N6-lactoyllysine; alternate occurs at positions 16, 17, 21, and 24. N6-glutaryllysine; alternate is present on K17. An N6-(2-hydroxyisobutyryl)lysine; alternate mark is found at K21 and K24. Residue K21 is modified to N6-(beta-hydroxybutyryl)lysine; alternate. An N6-butyryllysine; alternate modification is found at K21. K21 participates in a covalent cross-link: Glycyl lysine isopeptide (Lys-Gly) (interchain with G-Cter in SUMO2); alternate. K25 carries the post-translational modification N6-(2-hydroxyisobutyryl)lysine. K35 is modified (N6-(2-hydroxyisobutyryl)lysine; alternate). The residue at position 35 (K35) is an N6-(beta-hydroxybutyryl)lysine; alternate. K35 carries the post-translational modification N6-crotonyllysine; alternate. K35 carries the N6-glutaryllysine; alternate modification. K35 bears the N6-succinyllysine; alternate mark. K35 is covalently cross-linked (Glycyl lysine isopeptide (Lys-Gly) (interchain with G-Cter in ubiquitin); alternate). E36 is subject to PolyADP-ribosyl glutamic acid. S37 is modified (phosphoserine; by AMPK). N6-(2-hydroxyisobutyryl)lysine; alternate occurs at positions 44, 47, and 58. K44 is subject to N6-lactoyllysine; alternate. 2 positions are modified to N6-glutaryllysine; alternate: K44 and K47. At K47 the chain carries N6-methyllysine; alternate. The residue at position 58 (K58) is an N6,N6-dimethyllysine; alternate. At R80 the chain carries Dimethylated arginine. N6-(2-hydroxyisobutyryl)lysine; alternate is present on K86. At K86 the chain carries N6-acetyllysine; alternate. At K86 the chain carries N6-lactoyllysine; alternate. At K86 the chain carries N6,N6,N6-trimethyllysine; alternate. Omega-N-methylarginine occurs at positions 87 and 93. The residue at position 109 (K109) is an N6-(2-hydroxyisobutyryl)lysine; alternate. K109 is modified (N6-(beta-hydroxybutyryl)lysine; alternate). An N6-lactoyllysine; alternate modification is found at K109. Position 109 is an N6-glutaryllysine; alternate (K109). K109 is subject to N6-methyllysine; alternate. S113 carries O-linked (GlcNAc) serine glycosylation. The residue at position 116 (T116) is a Phosphothreonine. 2 positions are modified to N6-(2-hydroxyisobutyryl)lysine; alternate: K117 and K121. K117 is subject to N6-(beta-hydroxybutyryl)lysine; alternate. K117 and K121 each carry N6-lactoyllysine; alternate. An N6-glutaryllysine; alternate mark is found at K117 and K121. N6-succinyllysine; alternate is present on residues K117 and K121. K117 is subject to N6-methylated lysine; alternate. A Glycyl lysine isopeptide (Lys-Gly) (interchain with G-Cter in ubiquitin); alternate cross-link involves residue K121.

The protein belongs to the histone H2B family. As to quaternary structure, the nucleosome is a histone octamer containing two molecules each of H2A, H2B, H3 and H4 assembled in one H3-H4 heterotetramer and two H2A-H2B heterodimers. The octamer wraps approximately 147 bp of DNA. Post-translationally, monoubiquitination at Lys-35 (H2BK34Ub) by the MSL1/MSL2 dimer is required for histone H3 'Lys-4' (H3K4me) and 'Lys-79' (H3K79me) methylation and transcription activation at specific gene loci, such as HOXA9 and MEIS1 loci. Similarly, monoubiquitination at Lys-121 (H2BK120Ub) by the RNF20/40 complex gives a specific tag for epigenetic transcriptional activation and is also prerequisite for histone H3 'Lys-4' and 'Lys-79' methylation. It also functions cooperatively with the FACT dimer to stimulate elongation by RNA polymerase II. H2BK120Ub also acts as a regulator of mRNA splicing: deubiquitination by USP49 is required for efficient cotranscriptional splicing of a large set of exons. Phosphorylated on Ser-15 (H2BS14ph) by STK4/MST1 during apoptosis; which facilitates apoptotic chromatin condensation. Also phosphorylated on Ser-15 in response to DNA double strand breaks (DSBs), and in correlation with somatic hypermutation and immunoglobulin class-switch recombination. Phosphorylation at Ser-37 (H2BS36ph) by AMPK in response to stress promotes transcription. In terms of processing, glcNAcylation at Ser-113 promotes monoubiquitination of Lys-121. It fluctuates in response to extracellular glucose, and associates with transcribed genes. Post-translationally, ADP-ribosylated by PARP1 or PARP2 on Ser-7 (H2BS6ADPr) in response to DNA damage. H2BS6ADPr promotes recruitment of CHD1L. Mono-ADP-ribosylated on Glu-3 (H2BE2ADPr) by PARP3 in response to single-strand breaks. Poly ADP-ribosylation on Glu-36 (H2BE35ADPr) by PARP1 regulates adipogenesis: it inhibits phosphorylation at Ser-37 (H2BS36ph), thereby blocking expression of pro-adipogenetic genes. Crotonylation (Kcr) is specifically present in male germ cells and marks testis-specific genes in post-meiotic cells, including X-linked genes that escape sex chromosome inactivation in haploid cells. Crotonylation marks active promoters and enhancers and confers resistance to transcriptional repressors. It is also associated with post-meiotically activated genes on autosomes. In terms of processing, hydroxybutyrylation of histones is induced by starvation. Post-translationally, lactylated in macrophages by EP300/P300 by using lactoyl-CoA directly derived from endogenous or exogenous lactate, leading to stimulates gene transcription.

The protein localises to the nucleus. Its subcellular location is the chromosome. Core component of nucleosome. Nucleosomes wrap and compact DNA into chromatin, limiting DNA accessibility to the cellular machineries which require DNA as a template. Histones thereby play a central role in transcription regulation, DNA repair, DNA replication and chromosomal stability. DNA accessibility is regulated via a complex set of post-translational modifications of histones, also called histone code, and nucleosome remodeling. This is Histone H2B type 1-H from Mus musculus (Mouse).